A 352-amino-acid chain; its full sequence is Histidine biosynthesis bifunctional protein HisB (352 aa).

Residues 1-164 (MSQKILFIDR…EIENEILSSF (164 aa)) form a histidinol-phosphatase region. Aspartate 9 functions as the Nucleophile in the catalytic mechanism. Mg(2+) is bound by residues aspartate 9 and aspartate 11. Catalysis depends on aspartate 11, which acts as the Proton donor. Residues cysteine 93, histidine 95, cysteine 101, and cysteine 103 each contribute to the Zn(2+) site. A Mg(2+)-binding site is contributed by aspartate 130. Positions 165–352 (RSASYQRTTK…ENLASSKGVI (188 aa)) are imidazoleglycerol-phosphate dehydratase.

This sequence in the N-terminal section; belongs to the histidinol-phosphatase family. The protein in the C-terminal section; belongs to the imidazoleglycerol-phosphate dehydratase family. Mg(2+) is required as a cofactor. Requires Zn(2+) as cofactor.

The protein localises to the cytoplasm. The enzyme catalyses D-erythro-1-(imidazol-4-yl)glycerol 3-phosphate = 3-(imidazol-4-yl)-2-oxopropyl phosphate + H2O. The catalysed reaction is L-histidinol phosphate + H2O = L-histidinol + phosphate. It functions in the pathway amino-acid biosynthesis; L-histidine biosynthesis; L-histidine from 5-phospho-alpha-D-ribose 1-diphosphate: step 6/9. Its pathway is amino-acid biosynthesis; L-histidine biosynthesis; L-histidine from 5-phospho-alpha-D-ribose 1-diphosphate: step 8/9. This Campylobacter jejuni subsp. doylei (strain ATCC BAA-1458 / RM4099 / 269.97) protein is Histidine biosynthesis bifunctional protein HisB.